We begin with the raw amino-acid sequence, 124 residues long: ATP synthase epsilon chain (124 aa).

The span at 99-118 shows a compositional bias: basic and acidic residues; that stretch reads LEQAKTEGDAHAERRADVRL. The tract at residues 99-124 is disordered; that stretch reads LEQAKTEGDAHAERRADVRLRAAAGR.

Belongs to the ATPase epsilon chain family. As to quaternary structure, F-type ATPases have 2 components, CF(1) - the catalytic core - and CF(0) - the membrane proton channel. CF(1) has five subunits: alpha(3), beta(3), gamma(1), delta(1), epsilon(1). CF(0) has three main subunits: a, b and c.

Its subcellular location is the cell membrane. Produces ATP from ADP in the presence of a proton gradient across the membrane. This chain is ATP synthase epsilon chain (atpC), found in Streptomyces coelicolor (strain ATCC BAA-471 / A3(2) / M145).